A 120-amino-acid polypeptide reads, in one-letter code: Large ribosomal subunit protein bL17 (120 aa).

Belongs to the bacterial ribosomal protein bL17 family. Part of the 50S ribosomal subunit. Contacts protein L32.

The chain is Large ribosomal subunit protein bL17 from Mesomycoplasma hyopneumoniae (strain J / ATCC 25934 / NCTC 10110) (Mycoplasma hyopneumoniae).